A 178-amino-acid polypeptide reads, in one-letter code: Germinal center-associated signaling and motility protein (178 aa).

S99 is subject to Phosphoserine. At Y148 the chain carries Phosphotyrosine.

Interacts with ACTB and MYH2; the interaction with MYH2 is increased by IL6-induced phosphorylation. Interacts (via C-terminus) with ARHGEF11 (via DH domain). Interacts with ARHGEF12. Interacts with SYK; the interaction increases after B-cell receptor stimulation, resulting in enhanced SYK autophosphorylation and activity. Post-translationally, phosphorylation on tyrosine residues can be induced by IL6. Phosphorylation is mediated by LYN. In terms of processing, targeted by the ubiquitin E3 ligase subunit FBXO10 to mediate its ubiquitination and degradation. In terms of tissue distribution, expressed in diffuse large B-cell lymphoma (DLBCL) and several germinal center (GC)-like lymphoma cell lines (at protein level). Highly expressed in normal GC lymphocytes and GC-derived malignancies. Expressed in thymus and spleen.

It localises to the cytoplasm. The protein resides in the cell membrane. Its function is as follows. Involved in the negative regulation of lymphocyte motility. It mediates the migration-inhibitory effects of IL6. Serves as a positive regulator of the RhoA signaling pathway. Enhancement of RhoA activation results in inhibition of lymphocyte and lymphoma cell motility by activation of its downstream effector ROCK. Is a regulator of B-cell receptor signaling, that acts through SYK kinase activation. This is Germinal center-associated signaling and motility protein (GCSAM) from Homo sapiens (Human).